Reading from the N-terminus, the 107-residue chain is Iron-binding protein IscA (107 aa).

Fe cation-binding residues include Cys35, Cys99, and Cys101.

It belongs to the HesB/IscA family. As to quaternary structure, homodimer; may form tetramers and higher multimers. The cofactor is Fe cation.

In terms of biological role, is able to transfer iron-sulfur clusters to apo-ferredoxin. Multiple cycles of [2Fe2S] cluster formation and transfer are observed, suggesting that IscA acts catalytically. Recruits intracellular free iron so as to provide iron for the assembly of transient iron-sulfur cluster in IscU in the presence of IscS, L-cysteine and the thioredoxin reductase system TrxA/TrxB. This is Iron-binding protein IscA from Salmonella agona (strain SL483).